Consider the following 874-residue polypeptide: Alanine--tRNA ligase (874 aa).

H562, H566, C664, and H668 together coordinate Zn(2+).

The protein belongs to the class-II aminoacyl-tRNA synthetase family. It depends on Zn(2+) as a cofactor.

Its subcellular location is the cytoplasm. The enzyme catalyses tRNA(Ala) + L-alanine + ATP = L-alanyl-tRNA(Ala) + AMP + diphosphate. Catalyzes the attachment of alanine to tRNA(Ala) in a two-step reaction: alanine is first activated by ATP to form Ala-AMP and then transferred to the acceptor end of tRNA(Ala). Also edits incorrectly charged Ser-tRNA(Ala) and Gly-tRNA(Ala) via its editing domain. In Shewanella sp. (strain ANA-3), this protein is Alanine--tRNA ligase.